Consider the following 758-residue polypeptide: Probable adenosylcobalamin-dependent ribonucleoside-triphosphate reductase (758 aa).

An intrachain disulfide couples Cys-194 to Cys-459. The disordered stretch occupies residues 233–256; sequence IIIKGQLPPPPPQQQPQQQQQQHG. Residues Cys-448 and Glu-450 contribute to the active site.

Belongs to the class II ribonucleoside-triphosphate reductase family. In terms of assembly, monomer. Adenosylcob(III)alamin serves as cofactor.

The enzyme catalyses a 2'-deoxyribonucleoside 5'-triphosphate + [thioredoxin]-disulfide + H2O = a ribonucleoside 5'-triphosphate + [thioredoxin]-dithiol. This chain is Probable adenosylcobalamin-dependent ribonucleoside-triphosphate reductase (rtpR), found in Dictyostelium discoideum (Social amoeba).